The sequence spans 310 residues: Nodulation protein D 1 (310 aa).

Residues 6 to 63 (LDLNLLVALDALMTERQLTAAARRINLSQPAMSAAIARLRNYFHDDLFVMQGRELILT) form the HTH lysR-type domain. Residues 23 to 42 (LTAAARRINLSQPAMSAAIA) constitute a DNA-binding region (H-T-H motif).

Belongs to the LysR transcriptional regulatory family.

In terms of biological role, nodD regulates the expression of the nodABCFE genes which encode other nodulation proteins. NodD is also a negative regulator of its own expression. Binds flavonoids as inducers. This Neorhizobium galegae (Rhizobium galegae) protein is Nodulation protein D 1 (nodD1).